Here is a 328-residue protein sequence, read N- to C-terminus: Coiled-coil domain-containing protein 54 (328 aa).

The stretch at 122–151 (TTKDILSMKEDIKALKKKVTELEKQNSYSR) forms a coiled coil. Residue Thr182 is modified to Phosphothreonine. Residues 186–197 (TDREMSSAEPEK) are compositionally biased toward basic and acidic residues. The tract at residues 186-205 (TDREMSSAEPEKVPSYPKST) is disordered.

In Macaca fascicularis (Crab-eating macaque), this protein is Coiled-coil domain-containing protein 54 (CCDC54).